The following is a 303-amino-acid chain: MQKFDTRTFQGLILTLQDYWARQGCTIVQPLDMEVGAGTSHPMTCLRELGPEPMAAAYVQPSRRPTDGRYGENPNRLQHYYQFQVVIKPSPDNIQELYLGSLKELGMDPTIHDIRFVEDNWENPTLGAWGLGWEVWLNGMEVTQFTYFQQVGGLECKPVTGEITYGLERLAMYIQGVDSVYDLVWSDGPLGKTTYGDVFHQNEVEQSTYNFEYADVDFLFTCFEQYEKEAQQLLALENPLPLPAYERILKAAHSFNLLDARKAISVTERQRYILRIRTLTKAVAEAYYASREALGFPMCNKDK.

Belongs to the class-II aminoacyl-tRNA synthetase family. In terms of assembly, tetramer of two alpha and two beta subunits.

It is found in the cytoplasm. The enzyme catalyses tRNA(Gly) + glycine + ATP = glycyl-tRNA(Gly) + AMP + diphosphate. In Escherichia coli (strain K12), this protein is Glycine--tRNA ligase alpha subunit (glyQ).